Consider the following 47-residue polypeptide: Potassium channel toxin gamma-KTx 5.2 (47 aa).

Disulfide bonds link Cys5/Cys23, Cys11/Cys34, Cys20/Cys39, and Cys24/Cys41.

The protein belongs to the ergtoxin family. Gamma-KTx 5 subfamily. In terms of tissue distribution, expressed by the venom gland.

The protein localises to the secreted. Reversibly blocks Kv11/ERG potassium channels. The polypeptide is Potassium channel toxin gamma-KTx 5.2 (Centruroides gracilis (Slenderbrown scorpion)).